The chain runs to 176 residues: Disulfide bond formation protein B (176 aa).

At 1-14 (MLRFLNQCSRGRGA) the chain is on the cytoplasmic side. Residues 15-31 (WLLMAFTALALEMVALW) traverse the membrane as a helical segment. Residues 32–49 (FQHVMLLKPCVLCIYERC) lie on the Periplasmic side of the membrane. A disulfide bond links C41 and C44. A helical membrane pass occupies residues 50–65 (ALFGVMGAGLVGAIAP). Topologically, residues 66–71 (KTPLRY) are cytoplasmic. The helical transmembrane segment at 72–89 (VAMVIWIYSAWRGLQLAY) threads the bilayer. The Periplasmic portion of the chain corresponds to 90–144 (EHTMIQLHPSPFMTCDFMARFPDWLPLGKWLPQVFVASGDCAERQWSFLTLEMPQ). An intrachain disulfide couples C104 to C130. A helical transmembrane segment spans residues 145 to 163 (WLLGIFAAYLVVAIAVVIA). Topologically, residues 164 to 176 (QAFKPKKRDLFGR) are cytoplasmic.

It belongs to the DsbB family.

Its subcellular location is the cell inner membrane. Functionally, required for disulfide bond formation in some periplasmic proteins. Acts by oxidizing the DsbA protein. The polypeptide is Disulfide bond formation protein B (Salmonella paratyphi A (strain ATCC 9150 / SARB42)).